Consider the following 835-residue polypeptide: BCL11 transcription factor A (835 aa).

The span at 1–12 shows a compositional bias: basic residues; sequence MSRRKQGKPQHL. The interval 1–41 is disordered; sequence MSRRKQGKPQHLSKREFSPEPLEAILTDDEPDHGPLGAPEG. The tract at residues 1-210 is required for nuclear body formation and for SUMO1 recruitment; sequence MSRRKQGKPQ…SEHGSPLTPR (210 aa). Residues 45–71 form a C2HC-type zinc finger; the sequence is LLTCGQCQMNFPLGDILIFIEHKRKQC. Zn(2+)-binding residues include Cys48, Cys51, His66, and Cys71. Residue Ser86 is modified to Phosphoserine. Lys123 is covalently cross-linked (Glycyl lysine isopeptide (Lys-Gly) (interchain with G-Cter in SUMO2)). Ile162 bears the Phosphothreonine mark. Lys164 participates in a covalent cross-link: Glycyl lysine isopeptide (Lys-Gly) (interchain with G-Cter in SUMO2). A C2H2-type 1 zinc finger spans residues 170–193; sequence YTCTTCKQPFTSAWFLLQHAQNTH. Position 205 is a phosphoserine (Ser205). Pro214 bears the Phosphothreonine mark. Residue Arg271 is modified to Asymmetric dimethylarginine. The tract at residues 323-376 is disordered; that stretch reads AGNTSSPPLSPGRPSPMQRLLQPFQPGSKPPFLATPPLPPLQSAPPPSQPPVKS. A phosphoserine mark is found at Ser332 and Ser337. Over residues 355–372 the composition is skewed to pro residues; the sequence is LATPPLPPLQSAPPPSQP. C2H2-type zinc fingers lie at residues 377–399 and 405–429; these read KSCE…RRSH and YKCN…THMH. Residues 421–430 are compositionally biased toward basic residues; that stretch reads KRHMKTHMHK. Disordered stretches follow at residues 421–458, 471–512, and 572–619; these read KRHM…LVGS, KSEN…ERVD, and RSHL…GLSK. Over residues 441-450 the composition is skewed to polar residues; it reads GLSTASSPEP. Phosphoserine is present on residues Ser446 and Ser447. Over residues 482–506 the composition is skewed to acidic residues; the sequence is NGDEEEEEDDEEEEEEEEEEEEELT. Over residues 574 to 584 the composition is skewed to basic and acidic residues; the sequence is HLAEAEGHRDT. Position 608 is a phosphoserine (Ser608). Lys620 participates in a covalent cross-link: Glycyl lysine isopeptide (Lys-Gly) (interchain with G-Cter in SUMO2). Residues Ser625 and Ser630 each carry the phosphoserine modification. Lys634 participates in a covalent cross-link: Glycyl lysine isopeptide (Lys-Gly) (interchain with G-Cter in SUMO1). The span at 682 to 696 shows a compositional bias: low complexity; that stretch reads SPFASSSEHSSENGS. Thr701 carries the post-translational modification Phosphothreonine. Positions 706–720 are enriched in gly residues; the sequence is LDGGISGRSGTGSGG. A DNA-binding region spans residues 737–835; the sequence is EGRRSDTCEY…RVLNNDIKTE (99 aa). The C2H2-type 4 zinc finger occupies 742–764; the sequence is DTCEYCGKVFKNCSNLTVHRRSH. The Zn(2+) site is built by Cys744, Cys747, His760, and His764. The segment covering 764–773 has biased composition (polar residues); it reads HTGERPYKCE. The disordered stretch occupies residues 765-769; that stretch reads TGERP. A C2H2-type 5 zinc finger spans residues 770 to 792; the sequence is YKCELCNYACAQSSKLTRHMKTH. Zn(2+) contacts are provided by Cys772, Cys775, His788, and His792. Positions 793 to 799 are disordered; it reads GQVGKDV. The C2H2-type 6 zinc finger occupies 800-823; that stretch reads YKCEICKMPFSVYSTLEKHMKKWH. The Zn(2+) site is built by Cys802, Cys805, His818, and His823.

Homotetrameric; self-associates via C2HC-type zinc finger domain. Interacts with MTA2, a component of the nucleosome remodeling and deacetylase (NuRD) repressor complex. Interacts with NR2F1, PIAS3, NR2F2 and NR2F6. Interacts with TBR1. Post-translationally, sumoylated with SUMO1. As to expression, isoforms are expressed in a tissue-specific fashion. Isoforms 1, isoform 2, and isoform 3 are expressed at similar levels in testis, kidney and spleen. Isoform 1 is expressed in the stomach, and isoform 2 is expressed exclusively in the lung. Overexpression following proviral integration in hematopoietic cells results in the generation of myeloid leukemia.

It is found in the cytoplasm. Its subcellular location is the nucleus. In terms of biological role, transcription factor. Associated with the BAF SWI/SNF chromatin remodeling complex. Binds to the 5'-TGACCA-3' sequence motif in regulatory regions of target genes. Involved in brain development. May play a role in hematopoiesis. Essential factor in lymphopoiesis, required for B-cell formation in fetal liver. May function as a modulator of the transcriptional repression activity of NR2F2. The chain is BCL11 transcription factor A (Bcl11a) from Mus musculus (Mouse).